The sequence spans 261 residues: Small ribosomal subunit protein mS23 (261 aa).

The tract at residues 234 to 261 is disordered; the sequence is NPSESWATDEKDPKKNDDIEEDVEEIKL. Residues 241 to 250 show a composition bias toward basic and acidic residues; sequence TDEKDPKKND. Acidic residues predominate over residues 251-261; it reads DIEEDVEEIKL.

This sequence belongs to the mitochondrion-specific ribosomal protein mS23 family. In terms of assembly, component of the mitochondrial small ribosomal subunit.

The protein resides in the mitochondrion. The sequence is that of Small ribosomal subunit protein mS23 (RSM25) from Vanderwaltozyma polyspora (strain ATCC 22028 / DSM 70294 / BCRC 21397 / CBS 2163 / NBRC 10782 / NRRL Y-8283 / UCD 57-17) (Kluyveromyces polysporus).